The primary structure comprises 777 residues: Homoaconitase, mitochondrial (777 aa).

The N-terminal 35 residues, Met-1–Ser-35, are a transit peptide targeting the mitochondrion. The tract at residues Leu-47 to Pro-74 is disordered. Positions Glu-52–Pro-74 are enriched in low complexity. [4Fe-4S] cluster contacts are provided by Cys-398, Cys-466, and Cys-469.

The protein belongs to the aconitase/IPM isomerase family. It depends on [4Fe-4S] cluster as a cofactor.

The protein localises to the mitochondrion. The catalysed reaction is (2R,3S)-homoisocitrate = cis-homoaconitate + H2O. It participates in amino-acid biosynthesis; L-lysine biosynthesis via AAA pathway; L-alpha-aminoadipate from 2-oxoglutarate: step 3/5. Catalyzes the reversible hydration of cis-homoaconitate to (2R,3S)-homoisocitrate, a step in the alpha-aminoadipate pathway for lysine biosynthesis. This chain is Homoaconitase, mitochondrial (lys4), found in Aspergillus fumigatus (strain ATCC MYA-4609 / CBS 101355 / FGSC A1100 / Af293) (Neosartorya fumigata).